Consider the following 180-residue polypeptide: Adenine phosphoribosyltransferase (180 aa).

This sequence belongs to the purine/pyrimidine phosphoribosyltransferase family. As to quaternary structure, homodimer.

Its subcellular location is the cytoplasm. It carries out the reaction AMP + diphosphate = 5-phospho-alpha-D-ribose 1-diphosphate + adenine. The protein operates within purine metabolism; AMP biosynthesis via salvage pathway; AMP from adenine: step 1/1. Its function is as follows. Catalyzes a salvage reaction resulting in the formation of AMP, that is energically less costly than de novo synthesis. This is Adenine phosphoribosyltransferase from Marinomonas sp. (strain MWYL1).